Here is a 156-residue protein sequence, read N- to C-terminus: 6,7-dimethyl-8-ribityllumazine synthase (156 aa).

5-amino-6-(D-ribitylamino)uracil contacts are provided by residues F22, 57-59 (AYE), and 81-83 (TVI). 86-87 (GT) provides a ligand contact to (2S)-2-hydroxy-3-oxobutyl phosphate. H89 (proton donor) is an active-site residue. F114 is a 5-amino-6-(D-ribitylamino)uracil binding site. R128 is a (2S)-2-hydroxy-3-oxobutyl phosphate binding site.

Belongs to the DMRL synthase family. In terms of assembly, forms an icosahedral capsid composed of 60 subunits, arranged as a dodecamer of pentamers.

It catalyses the reaction (2S)-2-hydroxy-3-oxobutyl phosphate + 5-amino-6-(D-ribitylamino)uracil = 6,7-dimethyl-8-(1-D-ribityl)lumazine + phosphate + 2 H2O + H(+). Its pathway is cofactor biosynthesis; riboflavin biosynthesis; riboflavin from 2-hydroxy-3-oxobutyl phosphate and 5-amino-6-(D-ribitylamino)uracil: step 1/2. In terms of biological role, catalyzes the formation of 6,7-dimethyl-8-ribityllumazine by condensation of 5-amino-6-(D-ribitylamino)uracil with 3,4-dihydroxy-2-butanone 4-phosphate. This is the penultimate step in the biosynthesis of riboflavin. This is 6,7-dimethyl-8-ribityllumazine synthase from Salmonella heidelberg (strain SL476).